The chain runs to 195 residues: 4'-phosphopantetheinyl transferase AcpT (195 aa).

This sequence belongs to the P-Pant transferase superfamily. Gsp/Sfp/HetI/AcpT family.

It catalyses the reaction apo-[ACP] + CoA = holo-[ACP] + adenosine 3',5'-bisphosphate + H(+). Its function is as follows. May be involved in an alternative pathway for phosphopantetheinyl transfer and holo-ACP synthesis in E.coli. The native apo-protein substrate is unknown. Is able to functionally replace AcpS in vivo but only when expressed at high levels. The protein is 4'-phosphopantetheinyl transferase AcpT of Escherichia coli (strain K12).